The primary structure comprises 208 residues: LexA repressor (208 aa).

The segment at residues Arg-28–Lys-48 is a DNA-binding region (H-T-H motif). Catalysis depends on for autocatalytic cleavage activity residues Ser-125 and Lys-162.

It belongs to the peptidase S24 family. In terms of assembly, homodimer.

The enzyme catalyses Hydrolysis of Ala-|-Gly bond in repressor LexA.. Functionally, represses a number of genes involved in the response to DNA damage (SOS response), including recA and lexA. In the presence of single-stranded DNA, RecA interacts with LexA causing an autocatalytic cleavage which disrupts the DNA-binding part of LexA, leading to derepression of the SOS regulon and eventually DNA repair. This is LexA repressor from Aliivibrio fischeri (strain ATCC 700601 / ES114) (Vibrio fischeri).